The sequence spans 114 residues: Superoxide dismutase [Cu-Zn] (114 aa).

Cu cation-binding residues include His37, His39, and His54. Residues His54, His62, His71, and Asp74 each contribute to the Zn(2+) site. A disordered region spans residues 54-80 (HFNPGNKEHGAPTDGNRHLGDLGNIQA). A compositionally biased stretch (basic and acidic residues) spans 59-73 (NKEHGAPTDGNRHLG). Cu cation is bound at residue His111.

This sequence belongs to the Cu-Zn superoxide dismutase family. Homodimer. It depends on Cu cation as a cofactor. Requires Zn(2+) as cofactor.

The protein resides in the cytoplasm. The enzyme catalyses 2 superoxide + 2 H(+) = H2O2 + O2. Destroys radicals which are normally produced within the cells and which are toxic to biological systems. The polypeptide is Superoxide dismutase [Cu-Zn] (Drosophila tolteca (Fruit fly)).